Reading from the N-terminus, the 408-residue chain is Tripartite motif containing 13 (408 aa).

An RING-type zinc finger spans residues 10–58 (CPICCSLFDDPRVLPCSHNFCKKCLDGVLEENSRTMQWRPSSFKCPTCR). The segment at 89-131 (PKMPVCKEHSDQPLNIFCSTDLKLICGSCATTGEHKKHVFSSI) adopts a B box-type zinc-finger fold. Residues Cys94, His97, Cys117, and His123 each contribute to the Zn(2+) site. The chain crosses the membrane as a helical span at residues 322 to 342 (ILVVACLILLLVTFLCAYPFI).

The protein localises to the endoplasmic reticulum membrane. The protein operates within protein modification; protein ubiquitination. Functionally, E3 ubiquitin ligase involved in the retrotranslocation and turnover of membrane and secretory proteins from the ER through a set of processes named ER-associated degradation (ERAD). This process acts on misfolded proteins as well as in the regulated degradation of correctly folded proteins. The protein is Tripartite motif containing 13 (trim13) of Xenopus tropicalis (Western clawed frog).